Consider the following 178-residue polypeptide: Large ribosomal subunit protein uL13m (178 aa).

Belongs to the universal ribosomal protein uL13 family. As to quaternary structure, component of the mitochondrial ribosome large subunit (39S) which comprises a 16S rRNA and about 50 distinct proteins.

The protein resides in the mitochondrion. This is Large ribosomal subunit protein uL13m (mRpL13) from Drosophila melanogaster (Fruit fly).